Here is a 200-residue protein sequence, read N- to C-terminus: DNA dC-&gt;dU-editing enzyme APOBEC-3H (200 aa).

Residues 4 to 126 enclose the CMP/dCMP-type deaminase domain; sequence LTAETFRLQF…KPQQKGLRLL (123 aa). His-54 is a binding site for Zn(2+). Glu-56 functions as the Proton donor in the catalytic mechanism. Residues Cys-85 and Cys-88 each contribute to the Zn(2+) site. The stretch at 160 to 182 forms a coiled coil; sequence YKMLEELDKNSRAIKRRLERIKI.

This sequence belongs to the cytidine and deoxycytidylate deaminase family. As to quaternary structure, homodimer. Interacts with AGO1, AGO2 and AGO3. Zn(2+) serves as cofactor. (Microbial infection) Following infection by some HIV-1 strains, such as isolate BRU/LAI, can be ubiquitinated by a cullin-5-RING E3 ubiquitin-protein ligase complex (ECS complex) hijacked by the HIV-1 Vif protein, leading to its degradation. Ubiquitination by the ECS complex is however less efficent compared to APOBEC3G or APOBEC3G. In terms of tissue distribution, expressed in lymphoid organs. Also detected in non-lymphoid tissues including lung, testis, ovary, fetal liver and skin.

Its subcellular location is the cytoplasm. The protein localises to the nucleus. The protein resides in the P-body. The enzyme catalyses a 2'-deoxycytidine in single-stranded DNA + H2O + H(+) = a 2'-deoxyuridine in single-stranded DNA + NH4(+). APOBEC3H activity is regulated by RNA. While RNA-binding inhibits the DNA deaminase activity, double-stranded RNA is required for HIV-1 restriction by promoting APOBEC3H homodimerization and packaging into retroviral nucleocapsids. Its activity is regulated as follows. (Microbial infection) Antiviral activity is inhibited to some extent by the HIV-1 virion infectivity factor (VIF), that prevents its incorporation into progeny virions by both inhibiting its translation and/or by inducing its ubiquitination and subsequent degradation by the 26S proteasome. In terms of biological role, DNA deaminase (cytidine deaminase) which acts as an inhibitor of retrovirus replication and retrotransposon mobility via deaminase-dependent and -independent mechanisms. The A3H-var/haplotype 2 exhibits antiviral activity against vif-deficient HIV-1. After the penetration of retroviral nucleocapsids into target cells of infection and the initiation of reverse transcription, it can induce the conversion of cytosine to uracil in the minus-sense single-strand viral DNA, leading to G-to-A hypermutations in the subsequent plus-strand viral DNA. The resultant detrimental levels of mutations in the proviral genome, along with a deamination-independent mechanism that works prior to the proviral integration, together exert efficient antiretroviral effects in infected target cells. Selectively targets single-stranded DNA and does not deaminate double-stranded DNA or single- or double-stranded RNA. Exhibits antiviral activity also against T-cell leukemia virus type 1 (HTLV-1) and may inhibit the mobility of LTR and non-LTR retrotransposons. The polypeptide is DNA dC-&gt;dU-editing enzyme APOBEC-3H (Homo sapiens (Human)).